Consider the following 252-residue polypeptide: Geranylgeranylglyceryl phosphate synthase (252 aa).

Residues Asp-26 and Ser-55 each contribute to the Mg(2+) site. Sn-glycerol 1-phosphate-binding positions include 174 to 180 (YLEAGSG), 205 to 206 (GG), and 227 to 228 (GT).

It belongs to the GGGP/HepGP synthase family. Group II subfamily. It depends on Mg(2+) as a cofactor.

The protein localises to the cytoplasm. It carries out the reaction sn-glycerol 1-phosphate + (2E,6E,10E)-geranylgeranyl diphosphate = sn-3-O-(geranylgeranyl)glycerol 1-phosphate + diphosphate. The protein operates within membrane lipid metabolism; glycerophospholipid metabolism. In terms of biological role, prenyltransferase that catalyzes the transfer of the geranylgeranyl moiety of geranylgeranyl diphosphate (GGPP) to the C3 hydroxyl of sn-glycerol-1-phosphate (G1P). This reaction is the first ether-bond-formation step in the biosynthesis of archaeal membrane lipids. In Thermococcus gammatolerans (strain DSM 15229 / JCM 11827 / EJ3), this protein is Geranylgeranylglyceryl phosphate synthase.